A 159-amino-acid polypeptide reads, in one-letter code: U1 small nuclear ribonucleoprotein C (159 aa).

The Matrin-type zinc finger occupies Phe-4 to Asp-36. The segment at Lys-61 to Gly-99 is disordered. Composition is skewed to pro residues over residues Pro-63 to Gly-74 and Gly-84 to Gly-99.

This sequence belongs to the U1 small nuclear ribonucleoprotein C family. In terms of assembly, component of the U1 snRNP. The U1 snRNP is composed of the U1 snRNA and the 7 core Sm proteins snrpb, snrpd1, snrpd2, snrpd3, snrpe, snrpf and snrpg that assemble in a heptameric protein ring on the Sm site of the small nuclear RNA to form the core snRNP, and at least 3 U1 snRNP-specific proteins snrnp70/U1-70K, snrpa/U1-A and snrpc/U1-C. snrpc/U1-C interacts with U1 snRNA and the 5' splice-site region of the pre-mRNA.

The protein resides in the nucleus. Functionally, component of the spliceosomal U1 snRNP, which is essential for recognition of the pre-mRNA 5' splice-site and the subsequent assembly of the spliceosome. snrpc/U1-C is directly involved in initial 5' splice-site recognition for both constitutive and regulated alternative splicing. The interaction with the 5' splice-site seems to precede base-pairing between the pre-mRNA and the U1 snRNA. Stimulates commitment or early (E) complex formation by stabilizing the base pairing of the 5' end of the U1 snRNA and the 5' splice-site region. This is U1 small nuclear ribonucleoprotein C from Danio rerio (Zebrafish).